A 120-amino-acid polypeptide reads, in one-letter code: U13-lycotoxin-Ls1a (120 aa).

Positions 1–16 (MKILFVLISILHAVYC) are cleaved as a signal peptide. A propeptide spanning residues 17–54 (FSSEEDVDSAYLANELEPVEDINSEQYAALEPKEEHER) is cleaved from the precursor. Disulfide bonds link Cys-56–Cys-70, Cys-63–Cys-76, Cys-69–Cys-87, and Cys-78–Cys-85. Residues 56-95 (CADMGQDCKDDCDCCLNIATCNCWFGRYFCSCTFGDYQTC) enclose the Agouti domain.

The protein belongs to the neurotoxin 05 (agouti) family. In terms of processing, contains 6 disulfide bonds. As to expression, expressed by the venom gland.

It localises to the secreted. This chain is U13-lycotoxin-Ls1a, found in Lycosa singoriensis (Wolf spider).